A 311-amino-acid polypeptide reads, in one-letter code: Methionyl-tRNA formyltransferase (311 aa).

110 to 113 (SLLP) contacts (6S)-5,6,7,8-tetrahydrofolate.

The protein belongs to the Fmt family.

It carries out the reaction L-methionyl-tRNA(fMet) + (6R)-10-formyltetrahydrofolate = N-formyl-L-methionyl-tRNA(fMet) + (6S)-5,6,7,8-tetrahydrofolate + H(+). In terms of biological role, attaches a formyl group to the free amino group of methionyl-tRNA(fMet). The formyl group appears to play a dual role in the initiator identity of N-formylmethionyl-tRNA by promoting its recognition by IF2 and preventing the misappropriation of this tRNA by the elongation apparatus. The chain is Methionyl-tRNA formyltransferase from Streptococcus equi subsp. equi (strain 4047).